The sequence spans 265 residues: Putative methyltransferase 235L (265 aa).

The first 17 residues, 1–17, serve as a signal peptide directing secretion; the sequence is MDICICYFFTILTTISC.

It belongs to the methyltransferase superfamily.

The sequence is that of Putative methyltransferase 235L from Acheta domesticus (House cricket).